Reading from the N-terminus, the 362-residue chain is 3-dehydroquinate synthase (362 aa).

NAD(+) contacts are provided by residues 71–76 (DGEQYK), 105–109 (GVVGD), 129–130 (TT), lysine 142, lysine 151, and 169–172 (CLKT). The Zn(2+) site is built by glutamate 184, histidine 247, and histidine 264.

Belongs to the sugar phosphate cyclases superfamily. Dehydroquinate synthase family. Requires Co(2+) as cofactor. The cofactor is Zn(2+). It depends on NAD(+) as a cofactor.

The protein resides in the cytoplasm. The enzyme catalyses 7-phospho-2-dehydro-3-deoxy-D-arabino-heptonate = 3-dehydroquinate + phosphate. The protein operates within metabolic intermediate biosynthesis; chorismate biosynthesis; chorismate from D-erythrose 4-phosphate and phosphoenolpyruvate: step 2/7. Catalyzes the conversion of 3-deoxy-D-arabino-heptulosonate 7-phosphate (DAHP) to dehydroquinate (DHQ). This is 3-dehydroquinate synthase from Shigella flexneri serotype 5b (strain 8401).